The primary structure comprises 82 residues: Small ribosomal subunit protein bS16 (82 aa).

It belongs to the bacterial ribosomal protein bS16 family.

The chain is Small ribosomal subunit protein bS16 from Shewanella sp. (strain MR-4).